Here is a 119-residue protein sequence, read N- to C-terminus: MAGEEDWIELKFRLADGTDIGPSKYNQSMTVSSLKEKLISQWPKDKENTPKTVNDMKLINAGKILENNRTLAESRLPVCELPGMIITMHIVLRLPTLDKKSEKLQNDPPMKNRCVCTIL.

One can recognise a Ubiquitin-like domain in the interval 8 to 76 (IELKFRLADG…NNRTLAESRL (69 aa)). Cys-114 is lipidated: S-palmitoyl cysteine. Cysteine methyl ester is present on Cys-116. Cys-116 is lipidated: S-geranylgeranyl cysteine. The propeptide at 117–119 (TIL) is removed in mature form.

In terms of tissue distribution, ubiquitous.

The protein resides in the cell membrane. Its function is as follows. May serve as docking site to facilitate the association of other proteins to the plasma membrane. This Arabidopsis thaliana (Mouse-ear cress) protein is Membrane-anchored ubiquitin-fold protein 6 (MUB6).